Here is a 419-residue protein sequence, read N- to C-terminus: Septin-2 (419 aa).

Positions 40-306 constitute a Septin-type G domain; the sequence is NGFVFNVMCI…ELYRQKRLEQ (267 aa). The segment at 50–57 is G1 motif; sequence GETGLGKS. Residues 50 to 57, S79, G105, 186 to 194, G240, and R255 each bind GTP; these read GETGLGKS and KADTISKVE. Residues 102–105 form a G3 motif region; the sequence is DTVG. The interval 185-188 is G4 motif; it reads AKAD. Positions 259 to 269 are important for dimerization; sequence WGTVQVENETH.

The protein belongs to the TRAFAC class TrmE-Era-EngA-EngB-Septin-like GTPase superfamily. Septin GTPase family. May assemble into a multicomponent structure.

The protein localises to the cytoplasm. It is found in the cytoskeleton. The protein resides in the spindle. Involved in cytokinesis. The polypeptide is Septin-2 (Drosophila melanogaster (Fruit fly)).